Here is a 173-residue protein sequence, read N- to C-terminus: 6,7-dimethyl-8-ribityllumazine synthase (173 aa).

5-amino-6-(D-ribitylamino)uracil-binding positions include Y34, 65 to 67, and 94 to 96; these read ALE and CVI. 99–100 contributes to the (2S)-2-hydroxy-3-oxobutyl phosphate binding site; sequence ET. H102 acts as the Proton donor in catalysis. N127 provides a ligand contact to 5-amino-6-(D-ribitylamino)uracil. R141 serves as a coordination point for (2S)-2-hydroxy-3-oxobutyl phosphate.

It belongs to the DMRL synthase family.

It carries out the reaction (2S)-2-hydroxy-3-oxobutyl phosphate + 5-amino-6-(D-ribitylamino)uracil = 6,7-dimethyl-8-(1-D-ribityl)lumazine + phosphate + 2 H2O + H(+). It functions in the pathway cofactor biosynthesis; riboflavin biosynthesis; riboflavin from 2-hydroxy-3-oxobutyl phosphate and 5-amino-6-(D-ribitylamino)uracil: step 1/2. Catalyzes the formation of 6,7-dimethyl-8-ribityllumazine by condensation of 5-amino-6-(D-ribitylamino)uracil with 3,4-dihydroxy-2-butanone 4-phosphate. This is the penultimate step in the biosynthesis of riboflavin. This Methylorubrum extorquens (strain CM4 / NCIMB 13688) (Methylobacterium extorquens) protein is 6,7-dimethyl-8-ribityllumazine synthase.